A 310-amino-acid polypeptide reads, in one-letter code: Ribose-phosphate pyrophosphokinase (310 aa).

ATP-binding positions include 34–36 (DME) and 93–94 (RQ). Mg(2+)-binding residues include H127 and D167. K190 is a catalytic residue. D-ribose 5-phosphate-binding positions include R192, D216, and 220-224 (DSGGT).

The protein belongs to the ribose-phosphate pyrophosphokinase family. Class I subfamily. In terms of assembly, homohexamer. Requires Mg(2+) as cofactor.

The protein localises to the cytoplasm. The enzyme catalyses D-ribose 5-phosphate + ATP = 5-phospho-alpha-D-ribose 1-diphosphate + AMP + H(+). It participates in metabolic intermediate biosynthesis; 5-phospho-alpha-D-ribose 1-diphosphate biosynthesis; 5-phospho-alpha-D-ribose 1-diphosphate from D-ribose 5-phosphate (route I): step 1/1. In terms of biological role, involved in the biosynthesis of the central metabolite phospho-alpha-D-ribosyl-1-pyrophosphate (PRPP) via the transfer of pyrophosphoryl group from ATP to 1-hydroxyl of ribose-5-phosphate (Rib-5-P). This Granulibacter bethesdensis (strain ATCC BAA-1260 / CGDNIH1) protein is Ribose-phosphate pyrophosphokinase.